A 147-amino-acid chain; its full sequence is Ubiquitin-conjugating enzyme E2 5A (147 aa).

The span at 1 to 15 shows a compositional bias: basic and acidic residues; that stretch reads MASKRIQKELKDLQK. The disordered stretch occupies residues 1 to 24; sequence MASKRIQKELKDLQKDPPTSCSAG. Positions 1 to 147 constitute a UBC core domain; that stretch reads MASKRIQKEL…ARTWTQRYAM (147 aa). Cysteine 85 serves as the catalytic Glycyl thioester intermediate.

It belongs to the ubiquitin-conjugating enzyme family.

It catalyses the reaction S-ubiquitinyl-[E1 ubiquitin-activating enzyme]-L-cysteine + [E2 ubiquitin-conjugating enzyme]-L-cysteine = [E1 ubiquitin-activating enzyme]-L-cysteine + S-ubiquitinyl-[E2 ubiquitin-conjugating enzyme]-L-cysteine.. Its pathway is protein modification; protein ubiquitination. Functionally, E2 conjugating enzyme that associates with the E3 ubiquitin-protein ligase EL5 to mediate ubiquitination of target proteins. This is Ubiquitin-conjugating enzyme E2 5A (UBC5A) from Oryza sativa subsp. japonica (Rice).